Consider the following 95-residue polypeptide: U8-barytoxin-Tl1a (95 aa).

Residues 1 to 21 form the signal peptide; sequence MKTLVLVAVLGLASLYLLSYA. Residues 22-50 constitute a propeptide that is removed on maturation; that stretch reads SEVQQLSVAEEEFGALIDAFGGLLETEER. Cystine bridges form between cysteine 57–cysteine 71, cysteine 64–cysteine 76, and cysteine 70–cysteine 86.

It belongs to the neurotoxin 10 (Hwtx-1) family. 26 (ICK-1) subfamily. As to expression, expressed by the venom gland.

The protein resides in the secreted. Functionally, ion channel inhibitor. This is U8-barytoxin-Tl1a from Trittame loki (Brush-footed trapdoor spider).